The chain runs to 97 residues: Apolipoprotein C-II (97 aa).

A signal peptide spans 1-22 (MGSRFFLALFLVLLVLGNEVQG). The lipid binding stretch occupies residues 63 to 71 (SVDEKLRDM). The segment at 75–97 (SSAAMSTYAGIFTDQLLTLLKGE) is lipoprotein lipase cofactor.

The protein belongs to the apolipoprotein C2 family. In terms of processing, proapolipoprotein C-II is synthesized as a sialic acid containing glycoprotein which is subsequently desialylated prior to its proteolytic processing. Proapolipoprotein C-II, the major form found in plasma undergoes proteolytic cleavage of its N-terminal hexapeptide to generate the mature form apolipoprotein C-II, which occurs as the minor form in plasma.

It localises to the secreted. Its function is as follows. Component of chylomicrons, very low-density lipoproteins (VLDL), low-density lipoproteins (LDL), and high-density lipoproteins (HDL) in plasma. Plays an important role in lipoprotein metabolism as an activator of lipoprotein lipase. The polypeptide is Apolipoprotein C-II (Apoc2) (Grammomys surdaster (African woodland thicket rat)).